The primary structure comprises 322 residues: Methionyl-tRNA formyltransferase (322 aa).

113-116 is a (6S)-5,6,7,8-tetrahydrofolate binding site; it reads SLLP.

This sequence belongs to the Fmt family.

It catalyses the reaction L-methionyl-tRNA(fMet) + (6R)-10-formyltetrahydrofolate = N-formyl-L-methionyl-tRNA(fMet) + (6S)-5,6,7,8-tetrahydrofolate + H(+). In terms of biological role, attaches a formyl group to the free amino group of methionyl-tRNA(fMet). The formyl group appears to play a dual role in the initiator identity of N-formylmethionyl-tRNA by promoting its recognition by IF2 and preventing the misappropriation of this tRNA by the elongation apparatus. This Blochmanniella pennsylvanica (strain BPEN) protein is Methionyl-tRNA formyltransferase.